We begin with the raw amino-acid sequence, 975 residues long: Exportin-2 (975 aa).

Residues 29 to 105 (AEKLLESTEL…KTLIVTLMLH (77 aa)) enclose the Importin N-terminal domain.

The protein belongs to the XPO2/CSE1 family. Binds with high affinity to importin-alpha only in the presence of RanGTP.

It localises to the cytoplasm. The protein resides in the nucleus. Functionally, export receptor for importin alpha. Mediates importin-alpha re-export from the nucleus to the cytoplasm after import substrates have been released into the nucleoplasm. This Drosophila melanogaster (Fruit fly) protein is Exportin-2.